The primary structure comprises 222 residues: Charged multivesicular body protein 4b (222 aa).

Disordered regions lie at residues Met-1–Gln-21 and Gly-183–Ala-222. Residues Gln-21–Gln-182 are a coiled coil. The segment covering Pro-188–Lys-200 has biased composition (low complexity).

Belongs to the SNF7 family. As to quaternary structure, probable core component of the endosomal sorting required for transport complex III (ESCRT-III). ESCRT-III components are thought to multimerize to form a flat lattice on the perimeter membrane of the endosome.

It is found in the cytoplasm. Its subcellular location is the cytosol. It localises to the late endosome membrane. The protein resides in the midbody. Probable core component of the endosomal sorting required for transport complex III (ESCRT-III) which is involved in multivesicular bodies (MVBs) formation and sorting of endosomal cargo proteins into MVBs. MVBs contain intraluminal vesicles (ILVs) that are generated by invagination and scission from the limiting membrane of the endosome and mostly are delivered to lysosomes enabling degradation of membrane proteins, such as stimulated growth factor receptors, lysosomal enzymes and lipids. The sequence is that of Charged multivesicular body protein 4b (chmp4b) from Xenopus tropicalis (Western clawed frog).